The sequence spans 343 residues: DNA polymerase III subunit delta (343 aa).

3 domain regions span residues 1–140, 141–210, and 211–343; these read MIRL…VTCQ, TPEQ…NDAA, and HFTP…FIDG.

It belongs to the DNA polymerase HolA subunit family. In terms of assembly, the DNA polymerase III holoenzyme complex contains at least 10 different subunits organized into 3 functionally essential subassemblies: the Pol III core, the beta sliding clamp processivity factor and the clamp-loading complex. The Pol III core (subunits alpha, epsilon and theta) contains the polymerase and the 3'-5' exonuclease proofreading activities. The polymerase is tethered to the template via the dimeric beta sliding clamp processivity factor. The clamp-loading complex (also called gamma complex) assembles the beta sliding clamp onto the primed template and plays a central role in the organization and communication at the replication fork. The clamp-loading complex contains delta, delta', psi and chi, and 3 copies of either or both of two different DnaX proteins, gamma and tau. The DNA replisome complex has a single clamp loader (3 tau and 1 each of delta, delta', psi and chi subunits) which binds 3 Pol III cores (1 core on the leading strand and 2 on the lagging strand) each with a beta sliding clamp dimer. Additional proteins in the replisome are other copies of gamma, psi and chi, Ssb, DNA helicase and RNA primase. The clamp loader hydrolyzes ATP to assemble the beta processivity factor onto the primed template and plays a central role in the organization and communication at the replication fork; the minimal complex to load the beta sliding clamp on DNA is delta, delta', gamma.

It carries out the reaction DNA(n) + a 2'-deoxyribonucleoside 5'-triphosphate = DNA(n+1) + diphosphate. Part of the beta sliding clamp loading complex, which hydrolyzes ATP to load the beta clamp onto primed DNA to form the DNA replication pre-initiation complex. DNA polymerase III is a complex, multichain enzyme responsible for most of the replicative synthesis in bacteria. This DNA polymerase also exhibits 3'-5' exonuclease activity. The delta subunit is the wrench that will open the beta subunit dimer, which has been modeled to leave a gap large enough for ssDNA to pass through. The gamma complex (gamma(3),delta,delta') is thought to load beta dimers onto DNA by binding ATP which alters the complex's conformation so it can bind beta sliding clamp dimers and open them at one interface. Primed DNA is recognized, ATP is hydrolyzed releasing the gamma complex and closing the beta sliding clamp ring around the primed DNA. The chain is DNA polymerase III subunit delta (holA) from Escherichia coli (strain K12).